The following is a 316-amino-acid chain: Pantothenate kinase (316 aa).

An ATP-binding site is contributed by 95–102; sequence GSVAVGKS.

Belongs to the prokaryotic pantothenate kinase family.

It is found in the cytoplasm. The enzyme catalyses (R)-pantothenate + ATP = (R)-4'-phosphopantothenate + ADP + H(+). It participates in cofactor biosynthesis; coenzyme A biosynthesis; CoA from (R)-pantothenate: step 1/5. In Shewanella piezotolerans (strain WP3 / JCM 13877), this protein is Pantothenate kinase.